We begin with the raw amino-acid sequence, 591 residues long: A-type ATP synthase subunit A (591 aa).

233–240 (GPFGSGKT) contacts ATP.

Belongs to the ATPase alpha/beta chains family. As to quaternary structure, has multiple subunits with at least A(3), B(3), C, D, E, F, H, I and proteolipid K(x).

The protein resides in the cell membrane. It carries out the reaction ATP + H2O + 4 H(+)(in) = ADP + phosphate + 5 H(+)(out). Functionally, component of the A-type ATP synthase that produces ATP from ADP in the presence of a proton gradient across the membrane. The A chain is the catalytic subunit. The polypeptide is A-type ATP synthase subunit A (Metallosphaera sedula (strain ATCC 51363 / DSM 5348 / JCM 9185 / NBRC 15509 / TH2)).